The following is a 181-amino-acid chain: Insulin-like growth factor 2 (181 aa).

The N-terminal stretch at 1–24 is a signal peptide; that stretch reads MGIPVGKSLLMLFTFLAFASCCIA. The segment at 25–52 is b; sequence AYRPSETLCGGELVDTLQFVCGDRGFYF. Intrachain disulfides connect Cys-33-Cys-71, Cys-45-Cys-84, and Cys-70-Cys-75. A c region spans residues 53–64; it reads SRPASRINRRSR. An a region spans residues 65 to 85; sequence GIVEECCFRSCDLALLETYCA. The interval 86-91 is d; the sequence is TPAKSE. Positions 92 to 181 are cleaved as a propeptide — e peptide; sequence RDVSTPPTVL…AFVEVSSDLQ (90 aa). An O-linked (GalNAc...) threonine glycan is attached at Thr-163.

This sequence belongs to the insulin family. As to quaternary structure, interacts with MYORG; this interaction is required for IGF2 secretion. Interacts with integrins ITGAV:ITGB3 and ITGA6:ITGB4; integrin-binding is required for IGF2 signaling. Interacts with IGFBP2. Proteolytically processed by PCSK4, proIGF2 is cleaved at Arg-128 and Arg-92 to generate big-IGF2 and mature IGF2.

The protein localises to the secreted. Its function is as follows. The insulin-like growth factors possess growth-promoting activity. Major fetal growth hormone in mammals. Plays a key role in regulating fetoplacental development. IGF2 is influenced by placental lactogen. Also involved in tissue differentiation. In adults, involved in glucose metabolism in adipose tissue, skeletal muscle and liver. Acts as a ligand for integrin which is required for IGF2 signaling. Positively regulates myogenic transcription factor MYOD1 function by facilitating the recruitment of transcriptional coactivators, thereby controlling muscle terminal differentiation. Inhibits myoblast differentiation and modulates metabolism via increasing the mitochondrial respiration rate. In terms of biological role, preptin undergoes glucose-mediated co-secretion with insulin, and acts as a physiological amplifier of glucose-mediated insulin secretion. Exhibits osteogenic properties by increasing osteoblast mitogenic activity through phosphoactivation of MAPK1 and MAPK3. The chain is Insulin-like growth factor 2 from Equus caballus (Horse).